A 37-amino-acid chain; its full sequence is Trypsin inhibitor 3 (37 aa).

Disulfide bonds link Cys-4/Cys-21, Cys-11/Cys-25, and Cys-20/Cys-36.

In terms of biological role, trypsin inhibitor. The protein is Trypsin inhibitor 3 of Spinacia oleracea (Spinach).